A 532-amino-acid chain; its full sequence is Phosphoenolpyruvate carboxykinase (ATP) (532 aa).

Substrate is bound by residues Arg60, Tyr194, and Lys200. ATP is bound by residues Lys200, His219, and 237-245 (GLSGTGKTT). The Mn(2+) site is built by Lys200 and His219. Mn(2+) is bound at residue Asp258. The ATP site is built by Glu286, Arg324, and Thr449. Residue Arg324 coordinates substrate.

It belongs to the phosphoenolpyruvate carboxykinase (ATP) family. It depends on Mn(2+) as a cofactor.

The protein localises to the cytoplasm. The enzyme catalyses oxaloacetate + ATP = phosphoenolpyruvate + ADP + CO2. It participates in carbohydrate biosynthesis; gluconeogenesis. Involved in the gluconeogenesis. Catalyzes the conversion of oxaloacetate (OAA) to phosphoenolpyruvate (PEP) through direct phosphoryl transfer between the nucleoside triphosphate and OAA. The protein is Phosphoenolpyruvate carboxykinase (ATP) of Paracoccus denitrificans (strain Pd 1222).